Consider the following 338-residue polypeptide: tRNA-specific 2-thiouridylase MnmA (338 aa).

Residues 6–13 and Met-32 each bind ATP; that span reads AMSGGVDS. Cys-92 functions as the Nucleophile in the catalytic mechanism. A disulfide bridge connects residues Cys-92 and Cys-186. An ATP-binding site is contributed by Gly-116. Positions 134 to 136 are interaction with tRNA; the sequence is KDQ. Cys-186 (cysteine persulfide intermediate) is an active-site residue. Positions 288 to 289 are interaction with tRNA; sequence RY.

This sequence belongs to the MnmA/TRMU family.

It is found in the cytoplasm. It carries out the reaction S-sulfanyl-L-cysteinyl-[protein] + uridine(34) in tRNA + AH2 + ATP = 2-thiouridine(34) in tRNA + L-cysteinyl-[protein] + A + AMP + diphosphate + H(+). Its function is as follows. Catalyzes the 2-thiolation of uridine at the wobble position (U34) of tRNA, leading to the formation of s(2)U34. The polypeptide is tRNA-specific 2-thiouridylase MnmA (Campylobacter jejuni subsp. jejuni serotype O:2 (strain ATCC 700819 / NCTC 11168)).